The sequence spans 46 residues: Esculentin-1SEa (46 aa).

Cys-40 and Cys-46 are disulfide-bonded.

In terms of tissue distribution, expressed by the skin glands.

It is found in the secreted. In terms of biological role, mast cell degranulating peptide. Causes histamine release from rat peritoneal mast cells in vitro. Has antibacterial activity against the Gram-negative bacterium E.coli K12 and Gram-positive bacterium M.luteus NCT C2665. This is Esculentin-1SEa from Lithobates sevosus (Dusky gopher frog).